Consider the following 135-residue polypeptide: Galectin-1 (135 aa).

Ala2 is modified (N-acetylalanine). In terms of domain architecture, Galectin spans 4–135 (GLVASNLNLK…DFKIKCVAFE (132 aa)). Residues Lys13, Lys19, and Lys29 each carry the N6-acetyllysine modification. At Ser30 the chain carries Phosphoserine. Residues 45 to 49 (HFNPR), His53, Asn62, and 69 to 72 (WGTE) contribute to the a beta-D-galactoside site. At Lys108 the chain carries N6-acetyllysine; alternate. Position 108 is an N6-succinyllysine; alternate (Lys108). Position 128 is an N6-acetyllysine (Lys128).

In terms of assembly, binds LGALS3BP. Interacts with CD2, CD3, CD4, CD6, CD7, CD43, ALCAM and CD45. Interacts with laminin. Interacts with SUSD2. Exists in a reversible and active monomer-homodimer equilibrium, the mononomer/dimer state is regulated by lectin concentration. Interacts with cargo receptor TMED10; the interaction mediates the translocation from the cytoplasm into the ERGIC (endoplasmic reticulum-Golgi intermediate compartment) and thereby secretion.

Its subcellular location is the cytoplasm. The protein localises to the secreted. It is found in the extracellular space. It localises to the extracellular matrix. In terms of biological role, lectin that binds beta-galactoside and a wide array of complex carbohydrates. Plays a role in regulating apoptosis, cell proliferation and cell differentiation. Inhibits CD45 protein phosphatase activity and therefore the dephosphorylation of Lyn kinase. Strong inducer of T-cell apoptosis. This is Galectin-1 (LGALS1) from Cricetulus griseus (Chinese hamster).